We begin with the raw amino-acid sequence, 78 residues long: Antitoxin VapB27 (78 aa).

The SpoVT-AbrB domain occupies 1–45; sequence MKAVVDAAGRIVVPKPLREALGLQPGSTVEISRYGAGLHLIPTGR.

It belongs to the VapB family. Interacts with cognate toxin VapC27 and non-cognate toxins MazF6 and VapC40. Interaction with MazF6 and MazF9 partially neutralizes the toxins.

Antitoxin component of a type II toxin-antitoxin (TA) system. Cognate toxin is VapC27. Upon expression in E.coli partially counteracts the ribonuclease activity of non-cognate toxins MazF6 and MazF9. This chain is Antitoxin VapB27 (vapB27), found in Mycobacterium tuberculosis (strain ATCC 25618 / H37Rv).